The following is a 210-amino-acid chain: Pre-mRNA-splicing factor 38 (210 aa).

A disordered region spans residues 181 to 210; sequence PLSSSSDEEDDDEEQISKLESNEGAVDRNI. Basic and acidic residues predominate over residues 195-210; sequence QISKLESNEGAVDRNI.

It belongs to the PRP38 family. Component of the 25S U4/U6.U5 tri-snRNP particle, a subcomplex of the spliceosome.

The protein localises to the nucleus. Required for pre-mRNA splicing and maintenance of stable U6 small nuclear RNA levels. Implicated in the formation of stable and biologically active snRNP structures. As part of the U4/U6.U5 tri-snRNP particle, dispensible for spliceosome assembly, but required for conformational changes, which result in U4 snRNA release and the subsequent catalytic activation of the spliceosome. This is Pre-mRNA-splicing factor 38 from Schizosaccharomyces pombe (strain 972 / ATCC 24843) (Fission yeast).